A 305-amino-acid chain; its full sequence is Serine/threonine-protein phosphatase ppe1 (305 aa).

4 residues coordinate Mn(2+): aspartate 51, histidine 53, aspartate 79, and asparagine 111. The active-site Proton donor is histidine 112. Mn(2+)-binding residues include histidine 161 and histidine 235.

This sequence belongs to the PPP phosphatase family. PP-6 (PP-V) subfamily. As to quaternary structure, interacts with sts5, ekc1 and mis12. Mn(2+) is required as a cofactor.

The protein localises to the nucleus. It catalyses the reaction O-phospho-L-seryl-[protein] + H2O = L-seryl-[protein] + phosphate. The enzyme catalyses O-phospho-L-threonyl-[protein] + H2O = L-threonyl-[protein] + phosphate. Has a role in chromosome segregation. May provide a dynamic connection between kinetochore microtubules and kinetochore chromatin. Negatively regulates mis12. The protein is Serine/threonine-protein phosphatase ppe1 (ppe1) of Schizosaccharomyces pombe (strain 972 / ATCC 24843) (Fission yeast).